The chain runs to 1049 residues: Protein argonaute 12 (1049 aa).

Residues methionine 1 to glycine 53 show a composition bias toward gly residues. Disordered regions lie at residues methionine 1–valine 101 and glycine 144–threonine 192. Residues alanine 54–arginine 65 show a composition bias toward basic and acidic residues. Over residues glycine 66–alanine 76 the composition is skewed to gly residues. Over residues glycine 144–glycine 160 the composition is skewed to low complexity. The 112-residue stretch at proline 404–glutamate 515 folds into the PAZ domain. One can recognise a Piwi domain in the interval leucine 694–glutamate 1012.

The protein belongs to the argonaute family. Ago subfamily.

Its function is as follows. Probably involved in the RNA silencing pathway. May bind to short RNAs such as microRNAs (miRNAs) or short interfering RNAs (siRNAs), and represses the translation of mRNAs which are complementary to them. This Oryza sativa subsp. japonica (Rice) protein is Protein argonaute 12 (AGO12).